The sequence spans 397 residues: 3-hydroxybenzoate 6-hydroxylase (397 aa).

Belongs to the 3-hydroxybenzoate 6-hydroxylase family. As to quaternary structure, monomer. FAD serves as cofactor.

It carries out the reaction 3-hydroxybenzoate + NADH + O2 + H(+) = 2,5-dihydroxybenzoate + NAD(+) + H2O. Inhibited by copper, mercury and iron ions. Catalyzes the NAD- or NADP-dependent conversion of 3-hydroxybenzoate to gentisate. NAD and NADP function equally well. The protein is 3-hydroxybenzoate 6-hydroxylase (mhbM) of Klebsiella oxytoca.